Reading from the N-terminus, the 616-residue chain is D-glucuronyl C5-epimerase (616 aa).

Residues 1–12 (MKCLRWRSNRHR) lie on the Cytoplasmic side of the membrane. Residues 13–29 (IYLLVACGALFLLNRHL) form a helical; Signal-anchor for type II membrane protein membrane-spanning segment. Residues 30-616 (TQEESRIDEE…YAYGKRAKHN (587 aa)) are Extracellular-facing. Substrate contacts are provided by residues tyrosine 136, 141 to 143 (RDR), and glutamine 169. N-linked (GlcNAc...) asparagine glycans are attached at residues asparagine 188, asparagine 232, asparagine 267, and asparagine 471. Residues tyrosine 504, arginine 562, and 574–580 (RWDYHAV) contribute to the substrate site.

Belongs to the D-glucuronyl C5-epimerase family. Homodimer. Expression in comma stage embryos is strong in the hypodermis and intestine and weaker in the head region. In late embryos, larval, and adult stages, expressed primarily in hypodermis and intestine.

Its subcellular location is the cell membrane. The protein localises to the secreted. The protein resides in the extracellular space. It localises to the extracellular matrix. It is found in the basement membrane. It catalyses the reaction [heparosan-N-sulfate](n) = [heparan-N-sulfate](n). The protein operates within glycan metabolism; heparan sulfate biosynthesis. Its pathway is glycan metabolism; heparin biosynthesis. Functionally, converts D-glucuronic acid residues adjacent to N-sulfate sugar residues to L-iduronic acids. Plays a role in the early migration of AQR and PQR neurons, which descend from the Q neuroblasts. This Caenorhabditis elegans protein is D-glucuronyl C5-epimerase (hse-5).